We begin with the raw amino-acid sequence, 1749 residues long: Kinesin-like protein KIF13A (1749 aa).

The Kinesin motor domain occupies 5-352 (KVKVAVRVRP…LRYADRAKRI (348 aa)). 102 to 109 (GQTGSGKS) provides a ligand contact to ATP. Positions 359–431 (NEDPNAKVIR…QERQRQLESM (73 aa)) form a coiled coil. The FHA domain maps to 469–519 (HTRVGADTSQDIQLFGIGIQPEHCEIDIAADGDITLTPKENARSCVNGTLV). Residues 552 to 775 (LKDFERETSS…VPEAKRLYGK (224 aa)) are a coiled coil. Disordered stretches follow at residues 633-652 (QQLS…LAYS) and 834-853 (IPER…SGSL). Ser636 is subject to Phosphoserine. Residues 1086–1126 (SDALIKRREYLDEQIKKVSNKKEKTEDDMEREARLVEQWVG) are a coiled coil. At Ser1274 the chain carries Phosphoserine. A compositionally biased stretch (polar residues) spans 1370-1383 (LSTPNVHNVSSSRP). Disordered regions lie at residues 1370 to 1402 (LSTP…QLDV) and 1417 to 1436 (TLPR…ENPH). Residues 1421 to 1430 (DSPRRSKEGC) are compositionally biased toward basic and acidic residues. A phosphoserine mark is found at Ser1441, Ser1477, Ser1481, Ser1524, Ser1600, and Ser1650. A coiled-coil region spans residues 1475 to 1499 (LLSQEDSEEEENELEALSRKLMLTQ). 2 disordered regions span residues 1584–1665 (CAEP…GHQA) and 1698–1749 (DFDG…TATR). A compositionally biased stretch (basic and acidic residues) spans 1719–1741 (ETDHKGIPERPPDADRLHPKIEN).

It belongs to the TRAFAC class myosin-kinesin ATPase superfamily. Kinesin family. In terms of assembly, interacts with AP1G1 and AP1G2. Interacts with ZFYVE26. Interacts with AP2B1.

The protein resides in the golgi apparatus membrane. It is found in the cytoplasm. It localises to the cytoskeleton. The protein localises to the microtubule organizing center. Its subcellular location is the centrosome. The protein resides in the midbody. It is found in the endosome membrane. Functionally, plus end-directed microtubule-dependent motor protein involved in intracellular transport and regulating various processes such as mannose-6-phosphate receptor (M6PR) transport to the plasma membrane, endosomal sorting during melanosome biogenesis and cytokinesis. During melanosome maturation, required for delivering melanogenic enzymes from recycling endosomes to nascent melanosomes by creating peripheral recycling endosomal subdomains in melanocytes. Also required for the abscission step in cytokinesis: mediates translocation of ZFYVE26, and possibly TTC19, to the midbody during cytokinesis. Mediates the transport of M6PR-containing vesicles from trans-Golgi network to the plasma membrane via direct interaction with the AP-1 complex. This is Kinesin-like protein KIF13A (Kif13a) from Mus musculus (Mouse).